Reading from the N-terminus, the 100-residue chain is uncharacterized protein (100 aa).

This is an uncharacterized protein from Caenorhabditis elegans.